Consider the following 314-residue polypeptide: Malate dehydrogenase (314 aa).

NAD(+) is bound by residues 11-16 (GSGNIG) and D35. The substrate site is built by R84 and R90. Residues N97 and 120–122 (ITN) each bind NAD(+). Positions 122 and 153 each coordinate substrate. H177 functions as the Proton acceptor in the catalytic mechanism.

Belongs to the LDH/MDH superfamily. MDH type 3 family.

It catalyses the reaction (S)-malate + NAD(+) = oxaloacetate + NADH + H(+). In terms of biological role, catalyzes the reversible oxidation of malate to oxaloacetate. In Rickettsia conorii (strain ATCC VR-613 / Malish 7), this protein is Malate dehydrogenase.